An 859-amino-acid polypeptide reads, in one-letter code: Catenin delta-1 (859 aa).

A coiled-coil region spans residues 15–44; it reads SVRAQEAQFELLSRALEEERRHVTAQLDRV. The interval 226 to 254 is disordered; it reads IDGPDYATTGRRGANGGDPRRRLRSYEDP. Residues 243–254 are compositionally biased toward basic and acidic residues; sequence DPRRRLRSYEDP. 10 ARM repeats span residues 279–317, 320–359, 363–401, 402–446, 464–503, 513–552, 574–614, 621–660, 661–700, and 701–746; these read APNS…HLSY, EDVK…NLSY, RENK…VTGT, LWNL…RVEG, LRNI…LVDS, LRNI…VRRG, AQGY…NLCA, RCIR…NLCG, DNRN…CVIN, and TIHE…GFCL.

It belongs to the beta-catenin family. As to quaternary structure, interacts with C-cadherin and with zbtb33. In terms of tissue distribution, ubiquitously expressed.

The protein localises to the cell junction. Its subcellular location is the adherens junction. It localises to the cytoplasm. It is found in the nucleus. The protein resides in the cell membrane. Functionally, key regulator of cell-cell adhesion that associates with and regulates the cell adhesion properties of both C-, E- and N-cadherins, being critical for their surface stability. Beside cell-cell adhesion, regulates gene transcription through several transcription factors including ZBTB33/Kaiso2 and GLIS2, and the activity of Rho family GTPases and downstream cytoskeletal dynamics. Implicated both in cell transformation by SRC and in ligand-induced receptor signaling through the EGF, PDGF, CSF-1 and ERBB2 receptors. Required for gastrulation, axial elongation and development of the craniofacial skeleton and eye. The polypeptide is Catenin delta-1 (ctnnd1) (Xenopus laevis (African clawed frog)).